A 37-amino-acid polypeptide reads, in one-letter code: Large ribosomal subunit protein bL36 (37 aa).

This sequence belongs to the bacterial ribosomal protein bL36 family.

This chain is Large ribosomal subunit protein bL36, found in Borreliella afzelii (strain PKo) (Borrelia afzelii).